Here is a 101-residue protein sequence, read N- to C-terminus: Ubiquitin-related modifier 1 homolog (101 aa).

G101 carries the post-translational modification 1-thioglycine. Residue G101 forms a Glycyl lysine isopeptide (Gly-Lys) (interchain with K-? in acceptor proteins) linkage.

This sequence belongs to the URM1 family. As to quaternary structure, interacts with cer. In terms of processing, C-terminal thiocarboxylation occurs in 2 steps, it is first acyl-adenylated (-COAMP) via the hesA/moeB/thiF part of the MOCS3 homolog, then thiocarboxylated (-COSH) via the rhodanese domain of the MOCS3 homolog.

Its subcellular location is the cytoplasm. The protein operates within tRNA modification; 5-methoxycarbonylmethyl-2-thiouridine-tRNA biosynthesis. Functionally, acts as a sulfur carrier required for 2-thiolation of mcm(5)S(2)U at tRNA wobble positions of cytosolic tRNA(Lys), tRNA(Glu) and tRNA(Gln). Serves as sulfur donor in tRNA 2-thiolation reaction by being thiocarboxylated (-COSH) at its C-terminus by MOCS3. The sulfur is then transferred to tRNA to form 2-thiolation of mcm(5)S(2)U. Also acts as a ubiquitin-like protein (UBL) that is covalently conjugated via an isopeptide bond to lysine residues of target proteins such as Prx2/Jafrac1, Ciao1, Eip71CD and GILT1. The thiocarboxylated form serves as substrate for conjugation and oxidative stress specifically induces the formation of UBL-protein conjugates. The protein is Ubiquitin-related modifier 1 homolog of Drosophila simulans (Fruit fly).